We begin with the raw amino-acid sequence, 1108 residues long: MTNTKYYPEVSSNADFATIEKEILKFWQDNNIFQKSIDIREGDAEFIFYDGPPFANGLPHYGHLLTGFIKDVYARYQTVRGKKVERRFGWDCHGLPAEMQSEKELGISGHLAITNFGIEKFNAHCRDSVMKYAGEWEQYVTRQARWVDFKNSYKTMDKNFMESVLWAFKELYNKGLLYESMRVMPYSWACETPLSNFETRLDNSYRERADKAVTVSFVLCHPVSKSTLDVIPWLDHGIQKTINNDSANCSMDPVDKPRYDTENFLGITANYKEYRILAWTTTTWTLPSNLALAVGSDIDYALVPKGDVCYIIAASSVSKYAKELELKGDEQFTIIKGSELQGLSYKPLFDYFKNHPNSFKIFAGDFVVEGDGTGVVHMAPGFGEDDQILCESKGIKLVCPVDNSGKFTKEIPDLEGLQVFDANDKIIIKLKEQGNWLKTEQYIHNYPHCWRTDTPLIYKAVPSWYVKVTEFKDRMVELNQQINWIPTHVKDNLFGKWLENARDWSISRNRFWGTPLPVWKSDDPKYPRIDVYGSIEELEKDFGVKITDLHRPFIDELTRANPDDPTGKSTMRRIEDVFDCWFESGSMPYGQAHYPFENKQWFEEHFPADFIVEYSAQTRGWFYTLMVLSTALFDRPPFLNCICHGVILDATGQKLSKRLNNYADPLELFDKYGSDALRVTMLSSNVVKGQELLIDKDGKMVFDTLRLFIKPIWNAYHFFTMYANADHIKGELNFTSENVLDVYILSKLKIAVEKIKESLDSFDTGTAYHAVSEFFEVLNNWYIRRSRARFWKSEKDADKQSAYNTLYTCLETMAIAMSSLVPLISEAIYLGLYCHPRKSGDPEKPECLDSRLCGNDNLSVHLCDYPDLSKFKINSELVDTMDTVLDICNHSLFIRSSENARVRQPLSSITIISKNNDKLKSFEDLIKDEINVKSVIYRDDLENYAVKKLSINFPLLGKRLPAKMKDIIAASKKNEWEVTSGSLIICNETLNSDEYKLILEPHSHIKGASSFAHNSSLLILDLELTPELIDEGIARDIVRFIQQARKNADFAITDRILIDINLPKITDIYGEFIKEQTLGKFAKDFIPDHISEIELDNHKLQLKIKKVN.

The short motif at 53–63 (PFANGLPHYGH) is the 'HIGH' region element. The 'KMSKS' region motif lies at 654–658 (KLSKR). An ATP-binding site is contributed by Lys657.

This sequence belongs to the class-I aminoacyl-tRNA synthetase family. IleS type 2 subfamily. As to quaternary structure, monomer. Zn(2+) serves as cofactor.

The protein resides in the cytoplasm. The enzyme catalyses tRNA(Ile) + L-isoleucine + ATP = L-isoleucyl-tRNA(Ile) + AMP + diphosphate. Functionally, catalyzes the attachment of isoleucine to tRNA(Ile). As IleRS can inadvertently accommodate and process structurally similar amino acids such as valine, to avoid such errors it has two additional distinct tRNA(Ile)-dependent editing activities. One activity is designated as 'pretransfer' editing and involves the hydrolysis of activated Val-AMP. The other activity is designated 'posttransfer' editing and involves deacylation of mischarged Val-tRNA(Ile). The sequence is that of Isoleucine--tRNA ligase from Rickettsia bellii (strain OSU 85-389).